Here is a 322-residue protein sequence, read N- to C-terminus: MNKPKIFIDGEAGTTGLQIYSRLNERDDIELVSIAASKRKDADERAKLLNSVDVAILCLPDDAAREAVSLVNSSQVKILDASTAYRTAQGWVYGFPEMNPGQREKIANAQFVSNPGCYPTGFLACVRPLIAQGILPSSFPITINAVSGYSGGGKSLIQKYDSFHEQQKGATSDYPFGIYGLQFGHKHVKEMHQHSGLASPPLFIPAVGDFEQGMLVQIPLPLWTLDNPPSGEEIHQAIAQYYQGEKFVQVAPFKDPSLLRDGTFLDATAVNGTNIVQVFVFGNDNTKEALLVARLDNLGKGASGAAVQNLNIMLGLPEELGL.

C117 is an active-site residue.

This sequence belongs to the NAGSA dehydrogenase family. Type 2 subfamily.

The protein localises to the cytoplasm. The catalysed reaction is N-acetyl-L-glutamate 5-semialdehyde + phosphate + NADP(+) = N-acetyl-L-glutamyl 5-phosphate + NADPH + H(+). It participates in amino-acid biosynthesis; L-arginine biosynthesis; N(2)-acetyl-L-ornithine from L-glutamate: step 3/4. In terms of biological role, catalyzes the NADPH-dependent reduction of N-acetyl-5-glutamyl phosphate to yield N-acetyl-L-glutamate 5-semialdehyde. The polypeptide is N-acetyl-gamma-glutamyl-phosphate reductase 2 (Nostoc sp. (strain PCC 7120 / SAG 25.82 / UTEX 2576)).